Reading from the N-terminus, the 83-residue chain is Small proline-rich protein 2A3 (83 aa).

Repeat copies occupy residues 21-29 (PKCPEPCPP), 30-38 (QVWPGPCRP), 39-47 (VMCFEPCLP), 48-56 (SVWPGPCRP), and 57-65 (VVCYEQCPP). Positions 21–65 (PKCPEPCPPQVWPGPCRPVMCFEPCLPSVWPGPCRPVVCYEQCPP) are 5 X 9 AA approximate tandem repeats.

It belongs to the cornifin (SPRR) family. Post-translationally, forms five pairs of intrachain disulfide bonds.

The protein resides in the secreted. The protein localises to the extracellular space. It localises to the cytoplasmic vesicle. It is found in the secretory vesicle. Functionally, gut bactericidal protein that selectively kills Gram-positive bacteria by binding to negatively charged lipids on bacterial membranes, leading to bacterial membrane permeabilization and disruption. Specifically binds lipids bearing negatively charged headgroups, such as phosphatidic acid, phosphatidylserine (PS), cardiolipin (CL), and phosphatidylinositol phosphates, but not to zwitterionic or neutral lipids. Induced by type-2 cytokines in response to helminth infection and is required to protect against helminth-induced bacterial invasion of intestinal tissue. May also be involved in the development of the cornified envelope of squamous epithelia; however, additional evidences are required to confirm this result in vivo. The sequence is that of Small proline-rich protein 2A3 from Mus musculus (Mouse).